A 374-amino-acid polypeptide reads, in one-letter code: Queuine tRNA-ribosyltransferase (374 aa).

The active-site Proton acceptor is aspartate 92. Residues 92–96 (DSGGY), aspartate 146, glutamine 193, and glycine 220 each bind substrate. The segment at 251–257 (GVGKPDD) is RNA binding. The active-site Nucleophile is aspartate 270. Residues 275 to 279 (TRSGR) are RNA binding; important for wobble base 34 recognition. Zn(2+)-binding residues include cysteine 308, cysteine 310, cysteine 313, and histidine 339.

This sequence belongs to the queuine tRNA-ribosyltransferase family. Homodimer. Within each dimer, one monomer is responsible for RNA recognition and catalysis, while the other monomer binds to the replacement base PreQ1. It depends on Zn(2+) as a cofactor.

The enzyme catalyses 7-aminomethyl-7-carbaguanine + guanosine(34) in tRNA = 7-aminomethyl-7-carbaguanosine(34) in tRNA + guanine. Its pathway is tRNA modification; tRNA-queuosine biosynthesis. Catalyzes the base-exchange of a guanine (G) residue with the queuine precursor 7-aminomethyl-7-deazaguanine (PreQ1) at position 34 (anticodon wobble position) in tRNAs with GU(N) anticodons (tRNA-Asp, -Asn, -His and -Tyr). Catalysis occurs through a double-displacement mechanism. The nucleophile active site attacks the C1' of nucleotide 34 to detach the guanine base from the RNA, forming a covalent enzyme-RNA intermediate. The proton acceptor active site deprotonates the incoming PreQ1, allowing a nucleophilic attack on the C1' of the ribose to form the product. After dissociation, two additional enzymatic reactions on the tRNA convert PreQ1 to queuine (Q), resulting in the hypermodified nucleoside queuosine (7-(((4,5-cis-dihydroxy-2-cyclopenten-1-yl)amino)methyl)-7-deazaguanosine). This Novosphingobium aromaticivorans (strain ATCC 700278 / DSM 12444 / CCUG 56034 / CIP 105152 / NBRC 16084 / F199) protein is Queuine tRNA-ribosyltransferase.